Consider the following 111-residue polypeptide: UPF0060 membrane protein Cbei_2176 (111 aa).

Helical transmembrane passes span I7–W27, S33–L53, F60–W80, and I85–I105.

The protein belongs to the UPF0060 family.

The protein localises to the cell membrane. This chain is UPF0060 membrane protein Cbei_2176, found in Clostridium beijerinckii (strain ATCC 51743 / NCIMB 8052) (Clostridium acetobutylicum).